The primary structure comprises 594 residues: MIHSHNNNLSFCSQLITVRKMAALTRALPAPLHTSTTEYEEVPAPLPATPGPQLPKYGQRKGWKPKTAADFNGGGAYPECHVAQYPLDMGKKNKGQGSTLALQVDQDGLVRYDAIAQHGRAPGSRVQSSFKDLVPLANRTDVTESERQMERPDDLSVAETAERTRLALERITHGKIKAAQPKHVPKTNSDATYIRYTPANQSADEGKQRIIKMTEVQEDPLEPPRFKHKKIPRGPAEPPPPVLQSPPRAATAQDQKDWMIPPCISNWKNNKGYTIPLDKRLAADGRGLQDVHINDNFAKFSESLYIADRHIREEVRARAQLQQLLAQKQKTSKEEELRLLAQRAREDRSGLSSSVSGSVAAASASRLPAETGINLGGYGSESGSEEESDEEEEDEEAIRERNIVREEKRREREKEMRMSNMGSEMRAKMLAKEANRDISEKIALGLAKPSASKETLLDSRLFNREALSTGFASEDSYNLYDKPLFAGSSAAAAIYRPAGSSRNDESFGGGTEEGIKEEMSKDRFQLGNATRGFEGAEGVEAREGPVQFEKDTIVALDGSADPFGVEQFMDAARRGGKRTAEDRDEERRKRARDE.

5 disordered regions span residues 36–63 (TTEY…RKGW), 223–254 (PPRF…TAQD), 370–426 (ETGI…SEMR), 498–523 (AGSS…SKDR), and 566–594 (EQFM…ARDE). Composition is skewed to pro residues over residues 44 to 53 (APLPATPGPQ) and 235 to 244 (PAEPPPPVLQ). The segment covering 383 to 397 (GSEEESDEEEEDEEA) has biased composition (acidic residues). 3 stretches are compositionally biased toward basic and acidic residues: residues 398–417 (IRER…KEMR), 513–523 (EGIKEEMSKDR), and 578–594 (RTAE…ARDE).

This sequence belongs to the SNW family. As to quaternary structure, associated with the spliceosome.

Its subcellular location is the nucleus. Its function is as follows. Involved in pre-mRNA splicing. The chain is Pre-mRNA-processing protein 45 (PRP45) from Cryptococcus neoformans var. neoformans serotype D (strain B-3501A) (Filobasidiella neoformans).